A 127-amino-acid polypeptide reads, in one-letter code: Holo-[acyl-carrier-protein] synthase (127 aa).

The Mg(2+) site is built by Asp-9 and Glu-58.

This sequence belongs to the P-Pant transferase superfamily. AcpS family. Mg(2+) is required as a cofactor.

It is found in the cytoplasm. It catalyses the reaction apo-[ACP] + CoA = holo-[ACP] + adenosine 3',5'-bisphosphate + H(+). Functionally, transfers the 4'-phosphopantetheine moiety from coenzyme A to a Ser of acyl-carrier-protein. This is Holo-[acyl-carrier-protein] synthase from Shewanella sp. (strain MR-7).